Reading from the N-terminus, the 67-residue chain is Large ribosomal subunit protein bL31 (67 aa).

Zn(2+) is bound by residues cysteine 16, cysteine 18, cysteine 36, and cysteine 39.

It belongs to the bacterial ribosomal protein bL31 family. Type A subfamily. In terms of assembly, part of the 50S ribosomal subunit. Requires Zn(2+) as cofactor.

In terms of biological role, binds the 23S rRNA. The sequence is that of Large ribosomal subunit protein bL31 from Treponema pallidum (strain Nichols).